Consider the following 181-residue polypeptide: Oligoribonuclease (181 aa).

The Exonuclease domain maps to 8 to 171 (LIWVDLEMTG…DDIRESIAEL (164 aa)). The active site involves Y129.

It belongs to the oligoribonuclease family.

The protein localises to the cytoplasm. Its function is as follows. 3'-to-5' exoribonuclease specific for small oligoribonucleotides. In Vibrio parahaemolyticus serotype O3:K6 (strain RIMD 2210633), this protein is Oligoribonuclease.